The primary structure comprises 356 residues: Nicotinate-nucleotide--dimethylbenzimidazole phosphoribosyltransferase (356 aa).

Glu-317 acts as the Proton acceptor in catalysis.

This sequence belongs to the CobT family. Homodimer.

The enzyme catalyses 5,6-dimethylbenzimidazole + nicotinate beta-D-ribonucleotide = alpha-ribazole 5'-phosphate + nicotinate + H(+). Its pathway is nucleoside biosynthesis; alpha-ribazole biosynthesis; alpha-ribazole from 5,6-dimethylbenzimidazole: step 1/2. Catalyzes the synthesis of alpha-ribazole-5'-phosphate from nicotinate mononucleotide (NAMN) and 5,6-dimethylbenzimidazole (DMB). In Salmonella typhi, this protein is Nicotinate-nucleotide--dimethylbenzimidazole phosphoribosyltransferase.